The following is a 326-amino-acid chain: MSNGYEDHMAEDCRGDIGRTNLIVNYLPQNMTQDELRSLFSSIGEVESAKLIRDKVAGHSLGYGFVNYVTAKDAERAINTLNGLRLQSKTIKVSYARPSSEVIKDANLYISGLPRTMTQKDVEDMFSRFGRIINSRVLVDQTTGLSRGVAFIRFDKRSEAEEAITSFNGHKPPGSSEPITVKFAANPNQNKNVALLSQLYHSPARRFGGPVHHQAQRFRFSPMGVDHMSGLSGVNVPGNASSGWCIFIYNLGQDADEGILWQMFGPFGAVTNVKVIRDFNTNKCKGFGFVTMTNYEEAAMAIASLNGYRLGDKILQVSFKTNKSHK.

Residue S2 is modified to N-acetylserine. Position 2 is a phosphoserine (S2). In terms of domain architecture, RRM 1 spans 20–98; the sequence is TNLIVNYLPQ…KTIKVSYARP (79 aa). Phosphoserine occurs at positions 100 and 158. The RRM 2 domain maps to 106 to 186; it reads ANLYISGLPR…EPITVKFAAN (81 aa). K191 participates in a covalent cross-link: Glycyl lysine isopeptide (Lys-Gly) (interchain with G-Cter in SUMO2). 2 positions are modified to phosphoserine: S197 and S202. R206 is modified (omega-N-methylarginine). The residue at position 217 (R217) is an Asymmetric dimethylarginine; by CARM1; alternate. R217 bears the Omega-N-methylarginine; alternate mark. 2 positions are modified to phosphoserine: S221 and S318. The RRM 3 domain occupies 244–322; that stretch reads WCIFIYNLGQ…KILQVSFKTN (79 aa).

Belongs to the RRM elav family. As to quaternary structure, monomer and homodimer (in vitro). Interacts with ANP32A. Interacts with ZNF385A; the interaction is indirect and mRNA-dependent and may regulate p53/TP53 expression. Identified in a mRNP complex, at least composed of DHX9, DDX3X, ELAVL1, HNRNPU, IGF2BP1, ILF3, PABPC1, PCBP2, PTBP2, STAU1, STAU2, SYNCRIP and YBX1. Interacts with AGO1 and AGO2. Interacts with IGF2BP1; the interaction is enhanced by SEPIN14P20 peptide RBPR. Interacts with IGF2BP2 and IGF2BP3. Interacts with HNRNPL. Interacts with DHX36; this interaction occurs in a RNA-dependent manner. Interacts with ILF3; this interaction occurs in a RNA-dependent manner. Interacts with PLEKHN1. Interacts with SHFL; the interaction increases in presence of RNA. Interacts with YBX1; interaction recruits ELAVL1 on C5-methylcytosine (m5C)-containing mRNAs, thereby promoting mRNA stability. Interacts with FXR1. In terms of processing, phosphorylated by MAPKAPK2. Phosphorylated by PRKCD. Post-translationally, methylated at Arg-217 by CARM1 in macrophages in response to LPS challenge. As to expression, ubiquitous. Detected in brain, liver, thymus and muscle.

The protein localises to the cytoplasm. It is found in the nucleus. It localises to the stress granule. Its subcellular location is the P-body. Its function is as follows. RNA-binding protein that binds to the 3'-UTR region of mRNAs and increases their stability. Involved in embryonic stem cell (ESC) differentiation: preferentially binds mRNAs that are not methylated by N6-methyladenosine (m6A), stabilizing them, promoting ESC differentiation. Has also been shown to be capable of binding to m6A-containing mRNAs and contributes to MYC stability by binding to m6A-containing MYC mRNAs. Binds to poly-U elements and AU-rich elements (AREs) in the 3'-UTR of target mRNAs. Binds avidly to the AU-rich element in FOS and IL3/interleukin-3 mRNAs. In the case of the FOS AU-rich element, binds to a core element of 27 nucleotides that contain AUUUA, AUUUUA, and AUUUUUA motifs. Binds preferentially to the 5'-UUUU[AG]UUU-3' motif in vitro. With ZNF385A, binds the 3'-UTR of p53/TP53 mRNA to control their nuclear export induced by CDKN2A. Hence, may regulate p53/TP53 expression and mediate in part the CDKN2A anti-proliferative activity. May also bind with ZNF385A the CCNB1 mRNA. Increases the stability of the leptin mRNA harboring an AU-rich element (ARE) in its 3' UTR. This is ELAV-like protein 1 (ELAVL1) from Homo sapiens (Human).